The chain runs to 568 residues: Putative U-box domain-containing protein 55 (568 aa).

Residues 217 to 464 (QSESDRNDQL…KVAAEKDAAS (248 aa)) adopt a coiled-coil conformation. The U-box domain maps to 496–568 (QPPSYFICPI…AIQEWLQRNS (73 aa)).

It carries out the reaction S-ubiquitinyl-[E2 ubiquitin-conjugating enzyme]-L-cysteine + [acceptor protein]-L-lysine = [E2 ubiquitin-conjugating enzyme]-L-cysteine + N(6)-ubiquitinyl-[acceptor protein]-L-lysine.. The protein operates within protein modification; protein ubiquitination. In terms of biological role, functions as an E3 ubiquitin ligase. This Arabidopsis thaliana (Mouse-ear cress) protein is Putative U-box domain-containing protein 55 (PUB55).